Reading from the N-terminus, the 563-residue chain is 4-hydroxy-7-methoxy-3-oxo-3,4-dihydro-2H-1,4-benzoxazin-2-yl glucoside beta-D-glucosidase 2, chloroplastic (563 aa).

The N-terminal 51 residues, methionine 1 to arginine 51, are a transit peptide targeting the chloroplast. Positions leucine 17 to arginine 43 are disordered. Residues glutamine 89, histidine 193, and asparagine 241–glutamate 242 contribute to the a beta-D-glucoside site. The Proton donor role is filled by glutamate 242. Cysteine 261 and cysteine 267 are disulfide-bonded. The tract at residues serine 322–arginine 358 is dimerization. Position 384 (tyrosine 384) interacts with a beta-D-glucoside. Dimerization regions lie at residues histidine 391–leucine 402 and lysine 447–asparagine 450. A beta-D-glucoside-binding positions include glutamate 457, tryptophan 508, glutamate 515–tryptophan 516, and tyrosine 524. The active-site Nucleophile is glutamate 457.

Belongs to the glycosyl hydrolase 1 family. As to quaternary structure, homo- and heterodimer. Expressed in leaves only starting at day 6 after germination.

Its subcellular location is the plastid. It is found in the chloroplast. The enzyme catalyses Hydrolysis of terminal, non-reducing beta-D-glucosyl residues with release of beta-D-glucose.. It carries out the reaction DIMBOA beta-D-glucoside + H2O = DIMBOA + D-glucose. The catalysed reaction is DIBOA beta-D-glucoside + H2O = DIBOA + D-glucose. Its function is as follows. Beta-glucosidase acting poorly on artificial aryl beta-glucosides. Has no activity toward the chromogenic substrate 6-bromo-2-naphthyl-beta-D-glucoside (6BNGlc). In Zea mays (Maize), this protein is 4-hydroxy-7-methoxy-3-oxo-3,4-dihydro-2H-1,4-benzoxazin-2-yl glucoside beta-D-glucosidase 2, chloroplastic (GLU2).